We begin with the raw amino-acid sequence, 81 residues long: Protein Vpu (81 aa).

Topologically, residues M1–V7 are extracellular. The chain crosses the membrane as a helical span at residues A8–I28. Over E29–L81 the chain is Cytoplasmic. A disordered region spans residues E50 to L81. Residues N53 to E63 show a composition bias toward acidic residues. Position 57 is a phosphoserine; by host CK2 (S57).

This sequence belongs to the HIV-1 VPU protein family. Homopentamer. Interacts with host CD4 and BRTC; these interactions induce proteasomal degradation of CD4. Interacts with host BST2; this interaction leads to the degradation of host BST2. Interacts with host FBXW11. Interacts with host AP1M1; this interaction plays a role in the mistrafficking and subsequent degradation of host BST2. Interacts with host RANBP2; this interaction allows Vpu to down-regulate host BLM sumoylation. Phosphorylated by host CK2. This phosphorylation is necessary for interaction with human BTRC and degradation of CD4.

Its subcellular location is the host membrane. Its activity is regulated as follows. Ion channel activity is inhibited by hexamethylene amiloride in vitro. Enhances virion budding by targeting host CD4 and Tetherin/BST2 to proteasome degradation. Degradation of CD4 prevents any unwanted premature interactions between viral Env and its host receptor CD4 in the endoplasmic reticulum. Degradation of antiretroviral protein Tetherin/BST2 is important for virion budding, as BST2 tethers new viral particles to the host cell membrane. Mechanistically, Vpu bridges either CD4 or BST2 to BTRC, a substrate recognition subunit of the Skp1/Cullin/F-box protein E3 ubiquitin ligase, induces their ubiquitination and subsequent proteasomal degradation. The alteration of the E3 ligase specificity by Vpu seems to promote the degradation of host IKBKB, leading to NF-kappa-B down-regulation and subsequent apoptosis. Acts as a viroporin that forms an oligomeric ion channel in membranes. Modulates the host DNA repair mechanisms to promote degradation of nuclear viral cDNA in cells that are already productively infected in order to suppress immune sensing and proviral hyper-integration (superinfection). Manipulates PML-NBs and modulates SUMOylation of host BLM protein thereby enhancing its DNA-end processing activity toward viral unintegrated linear DNA. Also inhibits RAD52-mediated homologous repair of viral cDNA, preventing the generation of dead-end circular forms of single copies of the long terminal repeat and permitting sustained nucleolytic attack. The protein is Protein Vpu of Homo sapiens (Human).